Here is a 113-residue protein sequence, read N- to C-terminus: MISSVQNVSNLSMTRALGAVDTENSASSSAATMPGTAGAANGVSFASVMGNMASDAVNSLKGAESMSFAGIKGTATTREVVDSMLQAEQTLQTAIAIRDKVVSAFLEVTKMQM.

It belongs to the FliE family.

Its subcellular location is the bacterial flagellum basal body. The polypeptide is Flagellar hook-basal body complex protein FliE (Rhizobium etli (strain CIAT 652)).